A 292-amino-acid chain; its full sequence is NAD kinase (292 aa).

Asp-73 serves as the catalytic Proton acceptor. Residues 73–74 (DG), 147–148 (NE), His-158, Arg-175, Asp-177, 188–193 (TAYSLS), and Gln-247 each bind NAD(+).

Belongs to the NAD kinase family. It depends on a divalent metal cation as a cofactor.

It is found in the cytoplasm. It catalyses the reaction NAD(+) + ATP = ADP + NADP(+) + H(+). In terms of biological role, involved in the regulation of the intracellular balance of NAD and NADP, and is a key enzyme in the biosynthesis of NADP. Catalyzes specifically the phosphorylation on 2'-hydroxyl of the adenosine moiety of NAD to yield NADP. The chain is NAD kinase from Escherichia coli (strain SMS-3-5 / SECEC).